We begin with the raw amino-acid sequence, 609 residues long: Alpha-fetoprotein (609 aa).

Residues 1-18 form the signal peptide; it reads MKWVESIFLIFLLNFTES. 3 Albumin domains span residues 19–210, 211–402, and 403–601; these read RTLH…ATVT, KELR…EELQ, and KYIQ…KLIS. H22 is a Cu(2+) binding site. Cystine bridges form between C99–C114, C113–C124, C148–C193, C192–C201, C224–C270, C269–C277, C289–C303, and C302–C313. Residues S111, S115, and S117 each carry the phosphoserine; by FAM20C modification. The N-linked (GlcNAc...) asparagine glycan is linked to N251. S344 is subject to Phosphoserine; by FAM20C. 7 cysteine pairs are disulfide-bonded: C384–C393, C416–C462, C461–C472, C485–C501, C500–C511, C538–C583, and C582–C591. Phosphoserine; by FAM20C is present on residues S444 and S445.

This sequence belongs to the ALB/AFP/VDB family. Dimeric and trimeric forms have been found in addition to the monomeric form. Independent studies suggest heterogeneity of the N-terminal sequence of the mature protein and of the cleavage site of the signal sequence. In terms of processing, sulfated. Plasma. Synthesized by the fetal liver and yolk sac.

Its subcellular location is the secreted. Binds copper, nickel, and fatty acids as well as, and bilirubin less well than, serum albumin. Only a small percentage (less than 2%) of the human AFP shows estrogen-binding properties. This chain is Alpha-fetoprotein (AFP), found in Homo sapiens (Human).